A 656-amino-acid chain; its full sequence is Choline transporter-like protein 1 (656 aa).

The N-myristoyl glycine moiety is linked to residue Gly2. The Cytoplasmic portion of the chain corresponds to 2-29 (GCCSSASAAQSSKREWKPLEDRSCTDIP). The helical transmembrane segment at 30–50 (WLLLFVLFCIGMGFICGFSVA) threads the bilayer. Over 51 to 211 (TGAAARLVSG…RLISGVMTSK (161 aa)) the chain is Extracellular. N-linked (GlcNAc...) asparagine glycans are attached at residues Asn134 and Asn179. A helical transmembrane segment spans residues 212–232 (EIILGLCLLSLVLSMILMVII). The Cytoplasmic segment spans residues 233-237 (RYISR). A helical membrane pass occupies residues 238–258 (VLVWILTILVILGSLGGTGVL). The Extracellular segment spans residues 259-287 (WWLYAKQRRSPKETVIPEQLQIAEDNLRA). The helical transmembrane segment at 288–308 (LLIYAISATVFTVILFLIMLV) threads the bilayer. The Cytoplasmic segment spans residues 309–314 (MRKRVA). The chain crosses the membrane as a helical span at residues 315 to 335 (LTIALFHVAGKVFIHLPLLVF). The Extracellular segment spans residues 336–337 (QP). A helical membrane pass occupies residues 338–358 (FWTFFALVLFWAYWIMTLLFL). The Cytoplasmic segment spans residues 359–379 (GTTGSAVQNEQGFVEYKISGP). Residues 380-400 (LQYMWWYHVVGLIWISEFILA) traverse the membrane as a helical segment. Residues 401 to 441 (CQQMTVAGAVVTYYFTRDKRNLPFTPILASVNRLIRYHLGT) lie on the Extracellular side of the membrane. Residues 442–462 (VAKGSFIITLVKIPRMILMYI) traverse the membrane as a helical segment. At 463 to 536 (HSQLKGKENA…RVAAINTVGD (74 aa)) the chain is on the cytoplasmic side. A helical membrane pass occupies residues 537–557 (FMLFLGKVLIVCSTGLAGIML). At 558-565 (LNYQQDYT) the chain is on the extracellular side. Residues 566 to 586 (VWVLPLIIVCLFAFLVAHCFL) form a helical membrane-spanning segment. The Cytoplasmic segment spans residues 587 to 656 (SIYEMVVDVL…KPMASGASSA (70 aa)). Positions 635 to 656 (AGKGGAADARKLKPMASGASSA) are disordered. Phosphoserine is present on Ser651.

Belongs to the CTL (choline transporter-like) family. Expressed in neurons, oligodendrocytes and astrocytes. Also expressed in the mucosal cell layer of the colon. In the developing brain, isoform 1 is expressed in both neurons and oligodendroglial cells, whereas isoform 2 is restricted to oligodendroglial cells.

The protein localises to the cell membrane. Its subcellular location is the mitochondrion outer membrane. It carries out the reaction choline(out) + n H(+)(in) = choline(in) + n H(+)(out). The catalysed reaction is ethanolamine(out) + n H(+)(in) = ethanolamine(in) + n H(+)(out). Functionally, choline transporter, acts as a choline/H+ antiporter. Also acts as a high-affinity ethanolamine/H+ antiporter, regulating the supply of extracellular ethanolamine (Etn) for the CDP-Etn pathway, redistribute intracellular Etn and balance the CDP-Cho and CDP-Etn arms of the Kennedy pathway. Involved in membrane synthesis and myelin production. This Rattus norvegicus (Rat) protein is Choline transporter-like protein 1 (Slc44a1).